Consider the following 125-residue polypeptide: Small ribosomal subunit protein bS6 (125 aa).

Residues 100 to 125 are disordered; that stretch reads SPMVKAREERKPLTEVENNDFEDAEE. Positions 104-113 are enriched in basic and acidic residues; that stretch reads KAREERKPLT. The segment covering 116–125 has biased composition (acidic residues); the sequence is ENNDFEDAEE.

Belongs to the bacterial ribosomal protein bS6 family.

Functionally, binds together with bS18 to 16S ribosomal RNA. The sequence is that of Small ribosomal subunit protein bS6 from Histophilus somni (strain 129Pt) (Haemophilus somnus).